Consider the following 280-residue polypeptide: Phosphatidylserine decarboxylase proenzyme (280 aa).

Catalysis depends on charge relay system; for autoendoproteolytic cleavage activity residues Asp88, His144, and Ser247. The active-site Schiff-base intermediate with substrate; via pyruvic acid; for decarboxylase activity is Ser247. A Pyruvic acid (Ser); by autocatalysis modification is found at Ser247.

It belongs to the phosphatidylserine decarboxylase family. PSD-B subfamily. Prokaryotic type I sub-subfamily. Heterodimer of a large membrane-associated beta subunit and a small pyruvoyl-containing alpha subunit. The cofactor is pyruvate. In terms of processing, is synthesized initially as an inactive proenzyme. Formation of the active enzyme involves a self-maturation process in which the active site pyruvoyl group is generated from an internal serine residue via an autocatalytic post-translational modification. Two non-identical subunits are generated from the proenzyme in this reaction, and the pyruvate is formed at the N-terminus of the alpha chain, which is derived from the carboxyl end of the proenzyme. The autoendoproteolytic cleavage occurs by a canonical serine protease mechanism, in which the side chain hydroxyl group of the serine supplies its oxygen atom to form the C-terminus of the beta chain, while the remainder of the serine residue undergoes an oxidative deamination to produce ammonia and the pyruvoyl prosthetic group on the alpha chain. During this reaction, the Ser that is part of the protease active site of the proenzyme becomes the pyruvoyl prosthetic group, which constitutes an essential element of the active site of the mature decarboxylase.

The protein localises to the cell membrane. It catalyses the reaction a 1,2-diacyl-sn-glycero-3-phospho-L-serine + H(+) = a 1,2-diacyl-sn-glycero-3-phosphoethanolamine + CO2. It participates in phospholipid metabolism; phosphatidylethanolamine biosynthesis; phosphatidylethanolamine from CDP-diacylglycerol: step 2/2. Catalyzes the formation of phosphatidylethanolamine (PtdEtn) from phosphatidylserine (PtdSer). This Stenotrophomonas maltophilia (strain R551-3) protein is Phosphatidylserine decarboxylase proenzyme.